The primary structure comprises 902 residues: Protein NrfI (902 aa).

10 consecutive transmembrane segments (helical) span residues 9-29 (YITLTLLFLLLAVGAAIATFI), 75-95 (FLFHIAFVVILLGAGLTRYLG), 300-320 (VTYLGYALLFLGLLWNLLDPT), 335-355 (LSLLLPLCLLSPLASSLYAQS), 602-622 (LVLGFLVLLSAFGLLFFPPLA), 659-679 (DTYESMLYISWSGMLGALLFF), 731-751 (SYGFFGVGAFLGSFALALFIL), 772-792 (VSLILGLTLLVIGNFLGGIWA), 832-852 (YLFSLLSLWGFGSILMTYFGV), and 868-888 (LPIPLWVYALSLALALLSLIA).

The protein in the C-terminal section; belongs to the CcmF/CycK/Ccl1/NrfE/CcsA family.

It localises to the cell membrane. May play a role in cytochrome c biogenesis and may be required for maturation of the NrfA protein. This chain is Protein NrfI (nrfI), found in Wolinella succinogenes (strain ATCC 29543 / DSM 1740 / CCUG 13145 / JCM 31913 / LMG 7466 / NCTC 11488 / FDC 602W) (Vibrio succinogenes).